We begin with the raw amino-acid sequence, 881 residues long: Leucine--tRNA ligase (881 aa).

A 'HIGH' region motif is present at residues 48-58 (PYPSGKLHMGH). The 'KMSKS' region signature appears at 638 to 642 (KMSKS). Lys641 contributes to the ATP binding site.

Belongs to the class-I aminoacyl-tRNA synthetase family.

It is found in the cytoplasm. It carries out the reaction tRNA(Leu) + L-leucine + ATP = L-leucyl-tRNA(Leu) + AMP + diphosphate. This Herminiimonas arsenicoxydans protein is Leucine--tRNA ligase.